Reading from the N-terminus, the 156-residue chain is Single-stranded DNA-binding protein 1 (156 aa).

The region spanning 1–107 is the SSB domain; sequence MNETMICAVG…IDAVAIGHDL (107 aa). Positions 114–124 are enriched in low complexity; it reads FRRTARTEAST. Residues 114 to 156 form a disordered region; it reads FRRTARTEASTSPPRPEPNWEVPAGGTPGEPVPEQRPDPVPVG.

As to quaternary structure, homotetramer.

This is Single-stranded DNA-binding protein 1 (ssb1) from Streptomyces coelicolor (strain ATCC BAA-471 / A3(2) / M145).